Consider the following 134-residue polypeptide: Complexin-2 (134 aa).

Residues 1-114 (MDFVMKQALG…CGDEDEEDEE (114 aa)) form a disordered region. Residues 15–85 (DMGKMLGGDE…EEKEAEEKAA (71 aa)) show a composition bias toward basic and acidic residues. The stretch at 29-84 (DAQKKEEERQEALRQQEDERKQKHIRMETEREKVRQQIRDKYGLKKKEEKEAEEKA) forms a coiled coil.

It belongs to the complexin/synaphin family. Binds to the SNARE core complex containing SNAP25, VAMP2 and STX1A. In terms of tissue distribution, nervous system. Present in electric organ (at protein level).

It is found in the cytoplasm. The protein resides in the cytosol. It localises to the presynapse. Its subcellular location is the nucleus. The protein localises to the perikaryon. Functionally, positively regulates a late step in synaptic vesicle exocytosis. This chain is Complexin-2, found in Narke japonica (Japanese sleeper ray).